A 148-amino-acid chain; its full sequence is Arginine repressor (148 aa).

Belongs to the ArgR family.

It is found in the cytoplasm. The protein operates within amino-acid biosynthesis; L-arginine biosynthesis [regulation]. In terms of biological role, regulates arginine biosynthesis genes. This is Arginine repressor from Chloroherpeton thalassium (strain ATCC 35110 / GB-78).